Reading from the N-terminus, the 455-residue chain is Mitochondrial inner membrane magnesium transporter LPE10 (455 aa).

A mitochondrion-targeting transit peptide spans 1–56 (MHIKISTDFAIQNLHCTTMIRPLLRLCGQRTAATPFVSFFRPPKKPLSGISFARHY). Transmembrane regions (helical) follow at residues 365–385 (FQIG…YGMN) and 396–416 (GFLG…AHFL). The YGMN motif lies at 382-385 (YGMN). Basic and acidic residues predominate over residues 433–444 (KAMKKKDTVAEK). Residues 433-455 (KAMKKKDTVAEKRRNHLRNWLTK) are disordered.

Belongs to the CorA metal ion transporter (MIT) (TC 1.A.35) family. Forms homooligomers. Interacts with MRS2.

It localises to the mitochondrion inner membrane. Its function is as follows. Mitochondrial inner membrane magnesium transporter required for mitochondrial magnesium homeostasis. Modulates the conductance of the MRS2 channel. Involved in the splicing of mRNA group II introns in mitochondria by affecting mitochondrial magnesium concentrations, which are critical for group II intron splicing. The polypeptide is Mitochondrial inner membrane magnesium transporter LPE10 (LPE10) (Yarrowia lipolytica (strain CLIB 122 / E 150) (Yeast)).